The chain runs to 345 residues: Phosphoribosylformylglycinamidine cyclo-ligase (345 aa).

Belongs to the AIR synthase family.

It is found in the cytoplasm. It carries out the reaction 2-formamido-N(1)-(5-O-phospho-beta-D-ribosyl)acetamidine + ATP = 5-amino-1-(5-phospho-beta-D-ribosyl)imidazole + ADP + phosphate + H(+). It participates in purine metabolism; IMP biosynthesis via de novo pathway; 5-amino-1-(5-phospho-D-ribosyl)imidazole from N(2)-formyl-N(1)-(5-phospho-D-ribosyl)glycinamide: step 2/2. This Shewanella sp. (strain ANA-3) protein is Phosphoribosylformylglycinamidine cyclo-ligase.